The primary structure comprises 361 residues: Phospho-N-acetylmuramoyl-pentapeptide-transferase (361 aa).

The next 10 helical transmembrane spans lie at 21-41 (YLTIRALLAMLSALFIGLMLG), 69-89 (VGTPTMGGILILFAFIVSILI), 93-113 (WSNIYLWIIIVTSIIFSAIGF), 131-151 (SIKFLTQSLSAIVISTWIILI), 168-188 (IILPLSVFDFLILSYFVIVGS), 200-220 (GLAIMSVILISGALAIFAYFS), 240-260 (LFIICAALIGSSLGFLWFNAY), 264-284 (IFMGDVGSLSLGAILAVIAIL), 289-309 (ILLFIMGGVFVAETLSVIIQV), and 338-358 (KIIVRFWIVTLILVLIGLASI).

Belongs to the glycosyltransferase 4 family. MraY subfamily. It depends on Mg(2+) as a cofactor.

The protein resides in the cell inner membrane. It carries out the reaction UDP-N-acetyl-alpha-D-muramoyl-L-alanyl-gamma-D-glutamyl-meso-2,6-diaminopimeloyl-D-alanyl-D-alanine + di-trans,octa-cis-undecaprenyl phosphate = di-trans,octa-cis-undecaprenyl diphospho-N-acetyl-alpha-D-muramoyl-L-alanyl-D-glutamyl-meso-2,6-diaminopimeloyl-D-alanyl-D-alanine + UMP. Its pathway is cell wall biogenesis; peptidoglycan biosynthesis. Its function is as follows. Catalyzes the initial step of the lipid cycle reactions in the biosynthesis of the cell wall peptidoglycan: transfers peptidoglycan precursor phospho-MurNAc-pentapeptide from UDP-MurNAc-pentapeptide onto the lipid carrier undecaprenyl phosphate, yielding undecaprenyl-pyrophosphoryl-MurNAc-pentapeptide, known as lipid I. The polypeptide is Phospho-N-acetylmuramoyl-pentapeptide-transferase (Vesicomyosocius okutanii subsp. Calyptogena okutanii (strain HA)).